We begin with the raw amino-acid sequence, 123 residues long: VQ motif-containing protein 29 (123 aa).

Residues threonine 24 to histidine 55 form a disordered region. Basic residues predominate over residues serine 33 to lysine 43. Residues phenylalanine 66–glycine 75 carry the VQ motif. Over residues proline 77 to alanine 94 the composition is skewed to basic and acidic residues. Residues proline 77–tryptophan 123 form a disordered region. The segment covering serine 97–serine 108 has biased composition (low complexity). Polar residues predominate over residues tryptophan 109 to tryptophan 123.

The protein localises to the nucleus. Its function is as follows. May function as negative regulator of flowering transition. In Arabidopsis thaliana (Mouse-ear cress), this protein is VQ motif-containing protein 29.